The chain runs to 116 residues: Transcription initiation factor IIA subunit 2 (116 aa).

Belongs to the TFIIA subunit 2 family. TFIIA is a heterodimer composed of the large TOA1 and the small TOA2 subunits.

The protein resides in the nucleus. TFIIA is a component of the transcription machinery of RNA polymerase II and plays an important role in transcriptional activation. TFIIA in a complex with tbp mediates transcriptional activity. The chain is Transcription initiation factor IIA subunit 2 (TOA2) from Pyricularia oryzae (strain 70-15 / ATCC MYA-4617 / FGSC 8958) (Rice blast fungus).